The chain runs to 75 residues: Metallothionein-like protein 1 (75 aa).

This sequence belongs to the metallothionein superfamily. Type 15 family.

Its function is as follows. Metallothioneins have a high content of cysteine residues that bind various heavy metals. This is Metallothionein-like protein 1 (ALI1) from Triticum aestivum (Wheat).